A 684-amino-acid chain; its full sequence is Kelch repeat and BTB domain-containing protein 7 (684 aa).

Residues 1–27 (MQSREDVPRSRRLASPRGGRRPKRISK) form a disordered region. Positions 10 to 26 (SRRLASPRGGRRPKRIS) are enriched in basic residues. Serine 29 is modified (phosphoserine). One can recognise a BTB domain in the interval 63–138 (CDVTIEVVTP…CYTGRVSLSE (76 aa)). Kelch repeat units follow at residues 386 to 435 (AVCV…YLNG), 436 to 484 (YIYI…VVQN), 486 to 523 (LYAVNSKRMLCYDPSHNMWLNCASLKRSDFQEACVFND), 524 to 564 (EIYC…IVNH), and 567 to 616 (KLLL…CLCA). The tract at residues 630–666 (ITEEDDARSESSTEWDLDGFSELDSESGSSSSFSDDE) is disordered. Over residues 631–654 (TEEDDARSESSTEWDLDGFSELDS) the composition is skewed to acidic residues. The ATG8 interaction motif (AIM) signature appears at 668 to 671 (WVQV).

In terms of assembly, core component of a BCR3 (BTB-CUL3-RBX1) E3 ubiquitin ligase complex, also named Cul3-RING ubiquitin ligase complex CUL3(KBTBD6/7), composed of CUL3, RBX1, KBTBD6 and KBTBD7. Interacts with GABARAP; the interaction is direct and is required for the ubiquitination of TIAM1. Interacts with GABARAPL1, GABARAPL2 and MAP1LC3B; the interaction is direct.

The protein localises to the cytoplasm. It is found in the nucleus. The protein operates within protein modification; protein ubiquitination. In terms of biological role, as part of the CUL3(KBTBD6/7) E3 ubiquitin ligase complex functions as a substrate adapter for the RAC1 guanine exchange factor (GEF) TIAM1, mediating its 'Lys-48' ubiquitination and proteasomal degradation. By controlling this ubiquitination, regulates RAC1 signal transduction and downstream biological processes including the organization of the cytoskeleton, cell migration and cell proliferation. Ubiquitination of TIAM1 requires the membrane-associated protein GABARAP which may restrict locally the activity of the complex. This chain is Kelch repeat and BTB domain-containing protein 7, found in Homo sapiens (Human).